Consider the following 303-residue polypeptide: Quinolinate synthase (303 aa).

Iminosuccinate is bound by residues His-24 and Ser-41. Cys-86 provides a ligand contact to [4Fe-4S] cluster. Residues Tyr-112–Asn-114 and Ser-129 each bind iminosuccinate. Cys-172 lines the [4Fe-4S] cluster pocket. Iminosuccinate contacts are provided by residues His-198 to Glu-200 and Thr-215. Cys-260 contributes to the [4Fe-4S] cluster binding site.

The protein belongs to the quinolinate synthase family. Type 2 subfamily. [4Fe-4S] cluster serves as cofactor.

The protein localises to the cytoplasm. The enzyme catalyses iminosuccinate + dihydroxyacetone phosphate = quinolinate + phosphate + 2 H2O + H(+). It functions in the pathway cofactor biosynthesis; NAD(+) biosynthesis; quinolinate from iminoaspartate: step 1/1. Catalyzes the condensation of iminoaspartate with dihydroxyacetone phosphate to form quinolinate. This is Quinolinate synthase from Alkaliphilus metalliredigens (strain QYMF).